A 319-amino-acid chain; its full sequence is Acetyl-coenzyme A carboxylase carboxyl transferase subunit alpha (319 aa).

The CoA carboxyltransferase C-terminal domain maps to 35-296; it reads NIDEEVHRLR…KAQLLADLAD (262 aa).

This sequence belongs to the AccA family. As to quaternary structure, acetyl-CoA carboxylase is a heterohexamer composed of biotin carboxyl carrier protein (AccB), biotin carboxylase (AccC) and two subunits each of ACCase subunit alpha (AccA) and ACCase subunit beta (AccD).

The protein localises to the cytoplasm. The catalysed reaction is N(6)-carboxybiotinyl-L-lysyl-[protein] + acetyl-CoA = N(6)-biotinyl-L-lysyl-[protein] + malonyl-CoA. It functions in the pathway lipid metabolism; malonyl-CoA biosynthesis; malonyl-CoA from acetyl-CoA: step 1/1. Its function is as follows. Component of the acetyl coenzyme A carboxylase (ACC) complex. First, biotin carboxylase catalyzes the carboxylation of biotin on its carrier protein (BCCP) and then the CO(2) group is transferred by the carboxyltransferase to acetyl-CoA to form malonyl-CoA. This chain is Acetyl-coenzyme A carboxylase carboxyl transferase subunit alpha, found in Shigella boydii serotype 4 (strain Sb227).